The primary structure comprises 317 residues: tRNA(Ile)-lysidine synthase (317 aa).

30-35 (SGGSDS) contributes to the ATP binding site.

Belongs to the tRNA(Ile)-lysidine synthase family.

It is found in the cytoplasm. The enzyme catalyses cytidine(34) in tRNA(Ile2) + L-lysine + ATP = lysidine(34) in tRNA(Ile2) + AMP + diphosphate + H(+). Ligates lysine onto the cytidine present at position 34 of the AUA codon-specific tRNA(Ile) that contains the anticodon CAU, in an ATP-dependent manner. Cytidine is converted to lysidine, thus changing the amino acid specificity of the tRNA from methionine to isoleucine. The chain is tRNA(Ile)-lysidine synthase from Chlamydia felis (strain Fe/C-56) (Chlamydophila felis).